The sequence spans 444 residues: E1B 55 kDa protein (444 aa).

Positions 1 to 35 (MEQNADMEPDRQVNQRPPRFRARGAGVRGRGRVRR) are disordered. S438 and S439 each carry phosphoserine.

It belongs to the adenoviridae E1B 55 kDa protein family. As to quaternary structure, interacts with host PML-4 and PML-5; this interaction promotes efficient subnuclear targeting of E1B-55K to PML nuclear bodies. Interacts with E4-ORF3 protein. Interacts with E4-ORF6 protein.

It localises to the host nucleus. The protein resides in the host cytoplasm. In terms of biological role, plays a major role to prevent cellular inhibition of viral genome replication. Assembles an SCF-like E3 ubiquitin ligase complex based on the cellular proteins ELOB, ELOC, CUL5 and RBX1, in cooperation with viral E4orf6. This viral RING-type ligase ubiquitinates cellular substrates and targets them to proteasomal degradation: TP53/p53, LIG4, MRE11-RAD50-NBS1 (MRN) complex, ITGA3, DAXX and BLM. E1B-55K probably acts as the substrate-specific adapter of the SCF-like E3 ubiquitin ligase complex. Degradation of host TP53/p53 activity is essential for preventing E1A-induced TP53 accumulation that would otherwise lead to cell apoptosis and growth arrest. E1B-55K also inactivates TP53 transcription-factor activity by binding its transactivation domain. E1B-55K also functions as a SUMO1 E3 ligase for TP53 which causes the latter to be sequestered in promyelocytic leukemia (PML) nuclear bodies thereby contributing to maximal inhibition of TP53 function. This chain is E1B 55 kDa protein, found in Canis lupus familiaris (Dog).